We begin with the raw amino-acid sequence, 252 residues long: MKWMIVEKAEELANVSYQLLKQEIVRHPEGLTIGLATGSSPLGVYEEWRKDRVDCRHVTTVNLDEYVGLSPDHPHSYHTFMQEHLFDAVDFKESYVPIGSTADPREESDRYEALVRQLGIDIQLLGIGSNGHIAFNEPGTPFDAKTHVTKLTESTRQANQRFFDRLEDVPTEAITMGIGTIMEAKKILLVASSERKAEAIRDMMEGPATTDCPATILQRHADVMVVLDEEAASLLSDEAKRTGRAAYTNFMK.

The active-site Proton acceptor; for enolization step is the aspartate 64. Asparagine 130 functions as the For ring-opening step in the catalytic mechanism. The Proton acceptor; for ring-opening step role is filled by histidine 132. Residue glutamate 137 is the For ring-opening step of the active site.

Belongs to the glucosamine/galactosamine-6-phosphate isomerase family. NagB subfamily.

The enzyme catalyses alpha-D-glucosamine 6-phosphate + H2O = beta-D-fructose 6-phosphate + NH4(+). It participates in amino-sugar metabolism; N-acetylneuraminate degradation; D-fructose 6-phosphate from N-acetylneuraminate: step 5/5. Functionally, catalyzes the reversible isomerization-deamination of glucosamine 6-phosphate (GlcN6P) to form fructose 6-phosphate (Fru6P) and ammonium ion. This chain is Glucosamine-6-phosphate deaminase, found in Exiguobacterium sibiricum (strain DSM 17290 / CCUG 55495 / CIP 109462 / JCM 13490 / 255-15).